The sequence spans 427 residues: Terminal nucleotidyltransferase 5B (427 aa).

Positions Met1–Gln49 are disordered. A compositionally biased stretch (low complexity) spans Ala15–Gly30.

This sequence belongs to the TENT family.

It localises to the cytoplasm. The protein localises to the nucleus. The catalysed reaction is RNA(n) + ATP = RNA(n)-3'-adenine ribonucleotide + diphosphate. Its function is as follows. Catalyzes the transfer of one adenosine molecule from an ATP to an mRNA poly(A) tail bearing a 3'-OH terminal group in an ATP hydrolysis-dependent manner. May be involved in maintaining the translation efficiency of at least some genes through preventing degradation of their mRNAs. Prefers RNA molecules that are adenosine-rich close to 3'-end. In addition, may inhibit cell proliferation and cell cycle progression through ubiquitination of beta-catenin/CTNNB1. The chain is Terminal nucleotidyltransferase 5B from Mus musculus (Mouse).